The chain runs to 310 residues: tRNA pseudouridine synthase B (310 aa).

Catalysis depends on aspartate 49, which acts as the Nucleophile.

Belongs to the pseudouridine synthase TruB family. Type 1 subfamily.

It catalyses the reaction uridine(55) in tRNA = pseudouridine(55) in tRNA. Responsible for synthesis of pseudouridine from uracil-55 in the psi GC loop of transfer RNAs. This Rhizobium etli (strain ATCC 51251 / DSM 11541 / JCM 21823 / NBRC 15573 / CFN 42) protein is tRNA pseudouridine synthase B.